Here is a 198-residue protein sequence, read N- to C-terminus: Recombination protein RecR (198 aa).

The C4-type zinc finger occupies 57 to 72 (CRQCRTLSEEELCPQC). The Toprim domain occupies 80–174 (SLLCVVEGPL…TLSRIAHGVP (95 aa)).

The protein belongs to the RecR family.

Its function is as follows. May play a role in DNA repair. It seems to be involved in an RecBC-independent recombinational process of DNA repair. It may act with RecF and RecO. The polypeptide is Recombination protein RecR (Pseudomonas aeruginosa (strain LESB58)).